Consider the following 210-residue polypeptide: Putative truncated L-serine dehydratase SDL1 (210 aa).

It belongs to the serine/threonine dehydratase family. Pyridoxal 5'-phosphate serves as cofactor.

It is found in the cytoplasm. The catalysed reaction is L-serine = pyruvate + NH4(+). Its pathway is carbohydrate biosynthesis; gluconeogenesis. The chain is Putative truncated L-serine dehydratase SDL1 (SDL1) from Saccharomyces cerevisiae (strain ATCC 204508 / S288c) (Baker's yeast).